Reading from the N-terminus, the 235-residue chain is TVP38/TMEM64 family inner membrane protein YdjZ (235 aa).

Over 1-13 (MMMMQSRKIWYYR) the chain is Periplasmic. Residues 14-34 (ITLIILLFAMLLAWALLPGVH) form a helical membrane-spanning segment. Residues 35–64 (EFINRSVAAFAAVDQQGIERFIQSYGALAA) are Cytoplasmic-facing. The helical transmembrane segment at 65–85 (VVSFLLMILQAIAAPLPAFLI) threads the bilayer. The Periplasmic portion of the chain corresponds to 86-95 (TFANASLFGA). The tract at residues 90–199 (ASLFGAFWGG…IVYSWAGSML (110 aa)) is VTT domain. The helical transmembrane segment at 96–116 (FWGGLLSWTSSMAGAALCFFI) threads the bilayer. Residues 117 to 176 (ARVMGREVVEKLTGKTVLDSMDGFFTRYGKHTILVCRLLPFVPFDPISYAAGLTSIRFRS) lie on the Cytoplasmic side of the membrane. A helical transmembrane segment spans residues 177 to 197 (FFIATGLGQLPATIVYSWAGS). Over 198–202 (MLTGG) the chain is Periplasmic. The chain crosses the membrane as a helical span at residues 203-223 (TFWFVTGLFILFALTVVIFMA). The Cytoplasmic portion of the chain corresponds to 224-235 (KKIWLERQKRNA).

This sequence belongs to the TVP38/TMEM64 family.

The protein resides in the cell inner membrane. This Escherichia coli (strain K12) protein is TVP38/TMEM64 family inner membrane protein YdjZ (ydjZ).